Consider the following 677-residue polypeptide: DNA polymerase epsilon subunit B (677 aa).

Belongs to the DNA polymerase epsilon subunit B family. Heterotetramer. Consists of four subunits: POL2, DPB2, DPB3 and DPB4.

It is found in the nucleus. As accessory component of the DNA polymerase epsilon (DNA polymerase II) participates in chromosomal DNA replication. The sequence is that of DNA polymerase epsilon subunit B (DPB2) from Eremothecium gossypii (strain ATCC 10895 / CBS 109.51 / FGSC 9923 / NRRL Y-1056) (Yeast).